The sequence spans 92 residues: Small ribosomal subunit protein uS19 (92 aa).

Belongs to the universal ribosomal protein uS19 family.

Protein S19 forms a complex with S13 that binds strongly to the 16S ribosomal RNA. This chain is Small ribosomal subunit protein uS19, found in Macrococcus caseolyticus (strain JCSC5402) (Macrococcoides caseolyticum).